Reading from the N-terminus, the 389-residue chain is Galactokinase (389 aa).

34 to 37 (EHTD) is a substrate binding site. Residues Ser68 and 125–131 (GSGLSSS) contribute to the ATP site. The Mg(2+) site is built by Ser131 and Glu163. The Proton acceptor role is filled by Asp175. Tyr225 provides a ligand contact to substrate.

This sequence belongs to the GHMP kinase family. GalK subfamily.

It localises to the cytoplasm. The enzyme catalyses alpha-D-galactose + ATP = alpha-D-galactose 1-phosphate + ADP + H(+). It participates in carbohydrate metabolism; galactose metabolism. In terms of biological role, catalyzes the transfer of the gamma-phosphate of ATP to D-galactose to form alpha-D-galactose-1-phosphate (Gal-1-P). The protein is Galactokinase of Clostridium acetobutylicum (strain ATCC 824 / DSM 792 / JCM 1419 / IAM 19013 / LMG 5710 / NBRC 13948 / NRRL B-527 / VKM B-1787 / 2291 / W).